Here is a 783-residue protein sequence, read N- to C-terminus: ATP-dependent zinc metalloprotease FtsH (783 aa).

The span at 1 to 16 shows a compositional bias: low complexity; it reads MSETPNTNEQNNPNNQ. Residues 1–79 form a disordered region; that stretch reads MSETPNTNEQ…DKEEDFASRL (79 aa). Topologically, residues 1-86 are cytoplasmic; it reads MSETPNTNEQ…SRLNTRPPQR (86 aa). A compositionally biased stretch (basic and acidic residues) spans 35–61; it reads MPERPERHNQADGAPKRPGDDDRKSER. The helical transmembrane segment at 87 to 107 threads the bilayer; sequence ASIITIIIIFLVAFFIGSQMM. Over 108-233 the chain is Extracellular; the sequence is NMVHGEETDD…EYQVTLPSNV (126 aa). The chain crosses the membrane as a helical span at residues 234 to 254; that stretch reads TEILISVLPMLLFAGLLIYFF. Residues 255-783 lie on the Cytoplasmic side of the membrane; sequence SQMSKANNSQ…APQPPAAPQQ (529 aa). Position 325-332 (325-332) interacts with ATP; the sequence is GPPGTGKT. A Zn(2+)-binding site is contributed by H547. E548 is an active-site residue. 2 residues coordinate Zn(2+): H551 and D623. Residues 738 to 771 are compositionally biased toward low complexity; it reads EAAAKAADQAEQPQVEAEPVAQVATPAAPVAPAV. Residues 738–783 form a disordered region; it reads EAAAKAADQAEQPQVEAEPVAQVATPAAPVAPAVPEAPQPPAAPQQ. Positions 772–783 are enriched in pro residues; sequence PEAPQPPAAPQQ.

The protein in the central section; belongs to the AAA ATPase family. In the C-terminal section; belongs to the peptidase M41 family. As to quaternary structure, homohexamer. It depends on Zn(2+) as a cofactor.

It localises to the cell membrane. In terms of biological role, acts as a processive, ATP-dependent zinc metallopeptidase for both cytoplasmic and membrane proteins. Plays a role in the quality control of integral membrane proteins. In Slackia heliotrinireducens (strain ATCC 29202 / DSM 20476 / NCTC 11029 / RHS 1) (Peptococcus heliotrinreducens), this protein is ATP-dependent zinc metalloprotease FtsH.